A 325-amino-acid chain; its full sequence is Homoserine O-succinyltransferase (325 aa).

The active-site Acyl-thioester intermediate is the C142. Substrate contacts are provided by K163 and S191. Catalysis depends on H234, which acts as the Proton acceptor. The active site involves E236. A substrate-binding site is contributed by R248.

The protein belongs to the MetA family.

It is found in the cytoplasm. The enzyme catalyses L-homoserine + succinyl-CoA = O-succinyl-L-homoserine + CoA. Its pathway is amino-acid biosynthesis; L-methionine biosynthesis via de novo pathway; O-succinyl-L-homoserine from L-homoserine: step 1/1. Its function is as follows. Transfers a succinyl group from succinyl-CoA to L-homoserine, forming succinyl-L-homoserine. The polypeptide is Homoserine O-succinyltransferase (Bradyrhizobium japonicum).